Reading from the N-terminus, the 185-residue chain is Threonylcarbamoyl-AMP synthase (185 aa).

In terms of domain architecture, YrdC-like spans 4–185 (SWRVQQAAQN…IATGQVMRAG (182 aa)).

The protein belongs to the SUA5 family. TsaC subfamily.

The protein resides in the cytoplasm. The catalysed reaction is L-threonine + hydrogencarbonate + ATP = L-threonylcarbamoyladenylate + diphosphate + H2O. Required for the formation of a threonylcarbamoyl group on adenosine at position 37 (t(6)A37) in tRNAs that read codons beginning with adenine. Catalyzes the conversion of L-threonine, HCO(3)(-)/CO(2) and ATP to give threonylcarbamoyl-AMP (TC-AMP) as the acyladenylate intermediate, with the release of diphosphate. This chain is Threonylcarbamoyl-AMP synthase, found in Pseudomonas syringae pv. tomato (strain ATCC BAA-871 / DC3000).